Here is a 568-residue protein sequence, read N- to C-terminus: Proline--tRNA ligase (568 aa).

The protein belongs to the class-II aminoacyl-tRNA synthetase family. ProS type 1 subfamily. In terms of assembly, homodimer.

It localises to the cytoplasm. It carries out the reaction tRNA(Pro) + L-proline + ATP = L-prolyl-tRNA(Pro) + AMP + diphosphate. Functionally, catalyzes the attachment of proline to tRNA(Pro) in a two-step reaction: proline is first activated by ATP to form Pro-AMP and then transferred to the acceptor end of tRNA(Pro). As ProRS can inadvertently accommodate and process non-cognate amino acids such as alanine and cysteine, to avoid such errors it has two additional distinct editing activities against alanine. One activity is designated as 'pretransfer' editing and involves the tRNA(Pro)-independent hydrolysis of activated Ala-AMP. The other activity is designated 'posttransfer' editing and involves deacylation of mischarged Ala-tRNA(Pro). The misacylated Cys-tRNA(Pro) is not edited by ProRS. This chain is Proline--tRNA ligase, found in Chromobacterium violaceum (strain ATCC 12472 / DSM 30191 / JCM 1249 / CCUG 213 / NBRC 12614 / NCIMB 9131 / NCTC 9757 / MK).